The chain runs to 908 residues: DNA mismatch repair protein MutS (908 aa).

ATP is bound at residue 662 to 669; that stretch reads GPNMGGKS.

This sequence belongs to the DNA mismatch repair MutS family.

In terms of biological role, this protein is involved in the repair of mismatches in DNA. It is possible that it carries out the mismatch recognition step. This protein has a weak ATPase activity. This chain is DNA mismatch repair protein MutS, found in Rhizobium johnstonii (strain DSM 114642 / LMG 32736 / 3841) (Rhizobium leguminosarum bv. viciae).